A 78-amino-acid polypeptide reads, in one-letter code: Acyl carrier protein (78 aa).

A Carrier domain is found at 2–77 (STIEERVKKI…AAIDYILSHQ (76 aa)). Ser-37 is subject to O-(pantetheine 4'-phosphoryl)serine.

It belongs to the acyl carrier protein (ACP) family. Post-translationally, 4'-phosphopantetheine is transferred from CoA to a specific serine of apo-ACP by AcpS. This modification is essential for activity because fatty acids are bound in thioester linkage to the sulfhydryl of the prosthetic group.

Its subcellular location is the cytoplasm. Its pathway is lipid metabolism; fatty acid biosynthesis. Carrier of the growing fatty acid chain in fatty acid biosynthesis. This chain is Acyl carrier protein, found in Tolumonas auensis (strain DSM 9187 / NBRC 110442 / TA 4).